Consider the following 358-residue polypeptide: HLA class I histocompatibility antigen, alpha chain E (358 aa).

Residues 1 to 21 form the signal peptide; that stretch reads MVDGTLLLLLSEALALTQTWA. Positions 22-111 are alpha-1; that stretch reads GSHSLKYFHT…LRGYYNQSEA (90 aa). Topologically, residues 22-305 are extracellular; it reads GSHSLKYFHT…KPASQPTIPI (284 aa). Positions 28, 84, 87, 98, and 105 each coordinate a peptide antigen. An N-linked (GlcNAc...) asparagine glycan is attached at Asn-107. Residues 112–203 form an alpha-2 region; it reads GSHTLQWMHG…EKGKETLLHL (92 aa). Cys-122 and Cys-185 are oxidised to a cystine. Positions 164, 167, 177, 180, and 192 each coordinate a peptide antigen. The tract at residues 204 to 295 is alpha-3; the sequence is EPPKTHVTHH…GLPEPVTLRW (92 aa). Positions 206-294 constitute an Ig-like C1-type domain; sequence PKTHVTHHPI…EGLPEPVTLR (89 aa). An intrachain disulfide couples Cys-224 to Cys-280. The segment at 296–305 is connecting peptide; it reads KPASQPTIPI. The chain crosses the membrane as a helical span at residues 306–329; that stretch reads VGIIAGLVLLGSVVSGAVVAAVIW. Topologically, residues 330–358 are cytoplasmic; it reads RKKSSGGKGGSYSKAEWSDSAQGSESHSL. The disordered stretch occupies residues 333–358; it reads SSGGKGGSYSKAEWSDSAQGSESHSL. The span at 348–358 shows a compositional bias: polar residues; that stretch reads DSAQGSESHSL. Ser-353 carries the phosphoserine modification.

It belongs to the MHC class I family. Forms a heterotrimer with B2M and a self- or a pathogen-derived peptide (peptide-bound HLA-E-B2M). Similarly to MHC class Ia assembly, HLA-E-B2M heterodimer interacts with components of the antigen processing machinery TAPBP and TAP1-TAP2 complex; this interaction is required for peptide loading and translocation to the cell surface. Interacts with CALCR; this interaction is required for appropriate folding. The optimum binding peptide is a nonamer (VL9) that is primarily derived from amino-acid residues 3-11 of the signal sequences of most HLA-A, -B, -C and -G molecules. The VL9 peptide anchors to five main sites in the peptide-binding groove of HLA-E. Peptide-bound HLA-E-B2M complex interacts with KLRD1-KLRC1 receptor on NK cells. Binds with lower affinity to activating KLRD1-KLRC2. The common subunit KLRC1 plays a prominent role in directly interacting with HLA-E. Peptide-bound HLA-E-B2M interacts with the alpha-beta TCR on unconventional CD8+ T cells. Peptide-free HLA-E interacts with HLA-F-B2M complex; this interaction may regulate the intracellular trafficking and the stability of peptide-free MHC class I open conformers (OCs). In terms of processing, N-glycosylated. The soluble form (sHLA-E) can be partly produced by proteolytic cleavage at the cell surface (shedding) by a matrix metalloproteinase. Alternative splicing is also suggested as a mechanism for generation of sHLA-E, although it remains to be proved. As to expression, expressed in secretory endometrial cells during pregnancy (at protein level). The expression in nonlymphoid tissues is restricted to endothelial cells from all types of vessels, including arteries, veins, capillaries, and lymphatics (at protein level). In lymphoid organs, it is mainly expressed in endothelial venules, B and T cells, monocytes, macrophages, NK cells and megakaryocytes (at protein level).

Its subcellular location is the cell membrane. The protein localises to the golgi apparatus membrane. It is found in the secreted. Functionally, non-classical major histocompatibility class Ib molecule involved in immune self-nonself discrimination. In complex with B2M/beta-2-microglobulin binds nonamer self-peptides derived from the signal sequence of classical MHC class Ia molecules (VL9 peptides - VMAPRT[V/L][L/V/I/F]L). Peptide-bound HLA-E-B2M heterotrimeric complex primarily functions as a ligand for natural killer (NK) cell inhibitory receptor KLRD1-KLRC1, enabling NK cells to monitor the expression of other MHC class I molecules in healthy cells and to tolerate self. Upon cellular stress, preferentially binds signal sequence-derived peptides from stress-induced chaperones and is no longer recognized by NK cell inhibitory receptor KLRD1-KLRC1, resulting in impaired protection from NK cells. Binds signal sequence-derived peptides from non-classical MHC class Ib HLA-G molecules and acts as a ligand for NK cell activating receptor KLRD1-KLRC2, likely playing a role in the generation and effector functions of adaptive NK cells and in maternal-fetal tolerance during pregnancy. Besides self-peptides, can also bind and present pathogen-derived peptides conformationally similar to VL9 peptides to alpha-beta T cell receptor (TCR) on unconventional CD8-positive cytotoxic T cells, ultimately triggering antimicrobial immune response. Presents HIV gag peptides (immunodominant KAFSPEVIPMF and subdominant KALGPAATL epitopes) predominantly to CD8-positive T cell clones expressing a TRAV17-containing TCR, triggering HLA-E-restricted T cell responses. Presents mycobacterial peptides to HLA-E-restricted CD8-positive T cells eliciting both cytotoxic and immunoregulatory functions. (Microbial infection) Viruses like human cytomegalovirus have evolved an escape mechanism whereby virus-induced down-regulation of host MHC class I molecules is coupled to the binding of viral peptides to HLA-E, restoring HLA-E expression and inducing HLA-E-dependent NK cell immune tolerance to infected cells. In terms of biological role, (Microbial infection) May bind HIV-1 gag/Capsid protein p24-derived peptide (AISPRTLNA) on infected cells and may inhibit NK cell cytotoxicity, a mechanism that allows HIV-1 to escape immune recognition. Its function is as follows. (Microbial infection) Upon SARS-CoV-2 infection, may contribute to functional exhaustion of cytotoxic NK cells and CD8-positive T cells. Binds SARS-CoV-2 S/Spike protein S1-derived peptide (LQPRTFLL) expressed on the surface of lung epithelial cells, inducing NK cell exhaustion and dampening of antiviral immune surveillance. The polypeptide is HLA class I histocompatibility antigen, alpha chain E (Homo sapiens (Human)).